Consider the following 252-residue polypeptide: Isoprenyl transferase (252 aa).

Residue Asp-32 is part of the active site. Asp-32 lines the Mg(2+) pocket. Substrate-binding positions include 33–36 (GNGR), Trp-37, Arg-45, His-49, and 77–79 (STE). Asn-80 serves as the catalytic Proton acceptor. Substrate contacts are provided by residues Trp-81, Arg-83, Arg-200, and 206-208 (RLS). Glu-219 contributes to the Mg(2+) binding site.

The protein belongs to the UPP synthase family. As to quaternary structure, homodimer. It depends on Mg(2+) as a cofactor.

In terms of biological role, catalyzes the condensation of isopentenyl diphosphate (IPP) with allylic pyrophosphates generating different type of terpenoids. The sequence is that of Isoprenyl transferase from Listeria monocytogenes serotype 4b (strain F2365).